The following is a 270-amino-acid chain: 5'-nucleotidase SurE (270 aa).

A divalent metal cation is bound by residues Asp-8, Asp-9, Ser-40, and Asn-98.

This sequence belongs to the SurE nucleotidase family. It depends on a divalent metal cation as a cofactor.

The protein resides in the cytoplasm. The catalysed reaction is a ribonucleoside 5'-phosphate + H2O = a ribonucleoside + phosphate. Nucleotidase that shows phosphatase activity on nucleoside 5'-monophosphates. This is 5'-nucleotidase SurE from Cyanothece sp. (strain PCC 7425 / ATCC 29141).